The following is a 585-amino-acid chain: uncharacterized protein (585 aa).

The segment covering 1–18 (MSALSTKLEPTNSYSESL) has biased composition (polar residues). A disordered region spans residues 1 to 23 (MSALSTKLEPTNSYSESLPPQRR).

It belongs to the protein kinase superfamily. ADCK protein kinase family.

This is an uncharacterized protein from Synechocystis sp. (strain ATCC 27184 / PCC 6803 / Kazusa).